The sequence spans 181 residues: Probable cobalt-precorrin-6B C(15)-methyltransferase (decarboxylating) (181 aa).

Residues Thr-16, 40–44 (GCGSG), Asp-61, and Ala-89 contribute to the S-adenosyl-L-methionine site.

Belongs to the methyltransferase superfamily. Archaeal-type CbiT family.

It carries out the reaction Co-precorrin-6B + S-adenosyl-L-methionine = Co-precorrin-7 + S-adenosyl-L-homocysteine + CO2. It functions in the pathway cofactor biosynthesis; adenosylcobalamin biosynthesis; cob(II)yrinate a,c-diamide from sirohydrochlorin (anaerobic route): step 8/10. Functionally, catalyzes the methylation of C-15 in cobalt-precorrin-6B followed by the decarboxylation of C-12 to form cobalt-precorrin-7. In Methanococcus maripaludis (strain C6 / ATCC BAA-1332), this protein is Probable cobalt-precorrin-6B C(15)-methyltransferase (decarboxylating).